Here is a 433-residue protein sequence, read N- to C-terminus: Glutamate-1-semialdehyde 2,1-aminomutase (433 aa).

K272 carries the N6-(pyridoxal phosphate)lysine modification.

The protein belongs to the class-III pyridoxal-phosphate-dependent aminotransferase family. HemL subfamily. In terms of assembly, homodimer. Requires pyridoxal 5'-phosphate as cofactor.

It is found in the cytoplasm. The catalysed reaction is (S)-4-amino-5-oxopentanoate = 5-aminolevulinate. It functions in the pathway porphyrin-containing compound metabolism; protoporphyrin-IX biosynthesis; 5-aminolevulinate from L-glutamyl-tRNA(Glu): step 2/2. It participates in porphyrin-containing compound metabolism; chlorophyll biosynthesis. This chain is Glutamate-1-semialdehyde 2,1-aminomutase, found in Synechococcus sp. (strain WH7803).